We begin with the raw amino-acid sequence, 309 residues long: UPF0282 protein Saci_0277 (309 aa).

The protein belongs to the UPF0282 family.

The protein is UPF0282 protein Saci_0277 of Sulfolobus acidocaldarius (strain ATCC 33909 / DSM 639 / JCM 8929 / NBRC 15157 / NCIMB 11770).